The following is a 432-amino-acid chain: Diaminopimelate decarboxylase (432 aa).

Residue lysine 66 is modified to N6-(pyridoxal phosphate)lysine. Residues glycine 248 and 290–293 each bind pyridoxal 5'-phosphate; that span reads EPGR. Positions 293, 330, and 334 each coordinate substrate. Residue cysteine 361 is the Proton donor of the active site. The substrate site is built by glutamate 362 and tyrosine 390. Tyrosine 390 lines the pyridoxal 5'-phosphate pocket.

The protein belongs to the Orn/Lys/Arg decarboxylase class-II family. LysA subfamily. Homodimer. Pyridoxal 5'-phosphate serves as cofactor.

The enzyme catalyses meso-2,6-diaminopimelate + H(+) = L-lysine + CO2. It participates in amino-acid biosynthesis; L-lysine biosynthesis via DAP pathway; L-lysine from DL-2,6-diaminopimelate: step 1/1. Functionally, specifically catalyzes the decarboxylation of meso-diaminopimelate (meso-DAP) to L-lysine. The sequence is that of Diaminopimelate decarboxylase from Bacillus methanolicus.